The sequence spans 533 residues: uncharacterized protein (533 aa).

5 consecutive transmembrane segments (helical) span residues 4–23 (FLAA…GLAI), 28–47 (VFGL…VVST), 57–79 (IVYQ…PAFF), 86–108 (GWKL…WVLI), and 151–173 (VIGY…AVGA). An RCK C-terminal domain is found at 263-347 (LGEERETKIE…VAEVRRFLGD (85 aa)). 4 helical membrane-spanning segments follow: residues 352-374 (LADV…GAIP), 379-401 (GGTT…LGAL), 422-444 (LGLA…AALT), and 454-476 (GGLV…VLRL).

The protein belongs to the AAE transporter (TC 2.A.81) family.

It is found in the cell membrane. This is an uncharacterized protein from Corynebacterium glutamicum (strain ATCC 13032 / DSM 20300 / JCM 1318 / BCRC 11384 / CCUG 27702 / LMG 3730 / NBRC 12168 / NCIMB 10025 / NRRL B-2784 / 534).